A 71-amino-acid chain; its full sequence is Translational regulator CsrA (71 aa).

Belongs to the CsrA/RsmA family. As to quaternary structure, homodimer; the beta-strands of each monomer intercalate to form a hydrophobic core, while the alpha-helices form wings that extend away from the core.

It localises to the cytoplasm. Functionally, a translational regulator that binds mRNA to regulate translation initiation and/or mRNA stability. Usually binds in the 5'-UTR at or near the Shine-Dalgarno sequence preventing ribosome-binding, thus repressing translation. Its main target seems to be the major flagellin gene, while its function is anatagonized by FliW. The polypeptide is Translational regulator CsrA (Clostridium botulinum (strain Alaska E43 / Type E3)).